The chain runs to 493 residues: uncharacterized protein (493 aa).

8–37 (DFLVVGGGTCGCVVAARLSEDPSATVMLLE) contributes to the FAD binding site. His-429 acts as the Proton acceptor in catalysis.

The protein belongs to the GMC oxidoreductase family. It depends on FAD as a cofactor.

This is an uncharacterized protein from Rhodococcus erythropolis (Arthrobacter picolinophilus).